The primary structure comprises 388 residues: F-box protein ETP2 (388 aa).

The region spanning 2–48 is the F-box domain; the sequence is KTIQEQLPNDLVEEILCRVPATSLRRLRSTCKAWNRLFKGDRILASK.

Interacts with EIN2 (via C-terminus).

Negative regulator of EIN2 protein stability. The protein is F-box protein ETP2 of Arabidopsis thaliana (Mouse-ear cress).